The primary structure comprises 774 residues: 5-methyltetrahydropteroyltriglutamate--homocysteine methyltransferase (774 aa).

5-methyltetrahydropteroyltri-L-glutamate contacts are provided by residues 23-26 (RELK) and lysine 123. Residues 446–448 (IGS) and glutamate 499 contribute to the L-homocysteine site. Residues 446–448 (IGS) and glutamate 499 contribute to the L-methionine site. Residues 530 to 531 (RC) and tryptophan 576 each bind 5-methyltetrahydropteroyltri-L-glutamate. Position 614 (aspartate 614) interacts with L-homocysteine. Aspartate 614 provides a ligand contact to L-methionine. Glutamate 620 contacts 5-methyltetrahydropteroyltri-L-glutamate. Zn(2+) is bound by residues histidine 656, cysteine 658, and glutamate 680. Histidine 709 serves as the catalytic Proton donor. Residue cysteine 741 participates in Zn(2+) binding.

It belongs to the vitamin-B12 independent methionine synthase family. The cofactor is Zn(2+).

It carries out the reaction 5-methyltetrahydropteroyltri-L-glutamate + L-homocysteine = tetrahydropteroyltri-L-glutamate + L-methionine. The protein operates within amino-acid biosynthesis; L-methionine biosynthesis via de novo pathway; L-methionine from L-homocysteine (MetE route): step 1/1. Its function is as follows. Catalyzes the transfer of a methyl group from 5-methyltetrahydrofolate to homocysteine resulting in methionine formation. This is 5-methyltetrahydropteroyltriglutamate--homocysteine methyltransferase from Aliivibrio fischeri (strain MJ11) (Vibrio fischeri).